A 299-amino-acid chain; its full sequence is Coenzyme PQQ synthesis protein B (299 aa).

The protein belongs to the PqqB family.

It participates in cofactor biosynthesis; pyrroloquinoline quinone biosynthesis. In terms of biological role, may be involved in the transport of PQQ or its precursor to the periplasm. This is Coenzyme PQQ synthesis protein B from Xanthomonas euvesicatoria pv. vesicatoria (strain 85-10) (Xanthomonas campestris pv. vesicatoria).